The sequence spans 599 residues: Prostaglandin G/H synthase 1 (599 aa).

An N-terminal signal peptide occupies residues 1 to 23 (MSRSLLLWFLLFLLLLPPLPVLL). The EGF-like domain maps to 31–69 (PVNPCCYYPCQHQGICVRFGLDRYQCDCTRTGYSGPNCT). 4 disulfides stabilise this stretch: Cys35-Cys46, Cys36-Cys158, Cys40-Cys56, and Cys58-Cys68. N-linked (GlcNAc...) asparagine glycosylation is found at Asn67, Asn103, and Asn143. His206 (proton acceptor) is an active-site residue. The active-site For cyclooxygenase activity is the Tyr384. Heme b is bound at residue His387. Residues Cys568 and Cys574 are joined by a disulfide bond.

It belongs to the prostaglandin G/H synthase family. In terms of assembly, homodimer. It depends on heme b as a cofactor.

Its subcellular location is the microsome membrane. The protein localises to the endoplasmic reticulum membrane. The catalysed reaction is (5Z,8Z,11Z,14Z)-eicosatetraenoate + AH2 + 2 O2 = prostaglandin H2 + A + H2O. The enzyme catalyses (5Z,8Z,11Z,14Z)-eicosatetraenoate + 2 O2 = prostaglandin G2. It carries out the reaction prostaglandin G2 + AH2 = prostaglandin H2 + A + H2O. It catalyses the reaction (9Z,12Z)-octadecadienoate + AH2 + O2 = (9R)-hydroxy-(10E,12Z)-octadecadienoate + A + H2O. The catalysed reaction is (9Z,12Z)-octadecadienoate + AH2 + O2 = (9S)-hydroxy-(10E,12Z)-octadecadienoate + A + H2O. The enzyme catalyses (9Z,12Z)-octadecadienoate + AH2 + O2 = (13S)-hydroxy-(9Z,11E)-octadecadienoate + A + H2O. It carries out the reaction (9Z,12Z)-octadecadienoate + AH2 + O2 = (13R)-hydroxy-(9Z,11E)-octadecadienoate + A + H2O. It participates in lipid metabolism; prostaglandin biosynthesis. The cyclooxygenase activity is inhibited by nonsteroidal anti-inflammatory drugs (NSAIDs) including ibuprofen, flurbiprofen, ketoprofen, naproxen, flurbiprofen, anirolac, fenclofenac and diclofenac. Its function is as follows. Dual cyclooxygenase and peroxidase that plays an important role in the biosynthesis pathway of prostanoids, a class of C20 oxylipins mainly derived from arachidonate ((5Z,8Z,11Z,14Z)-eicosatetraenoate, AA, C20:4(n-6)), with a particular role in the inflammatory response. The cyclooxygenase activity oxygenates AA to the hydroperoxy endoperoxide prostaglandin G2 (PGG2), and the peroxidase activity reduces PGG2 to the hydroxy endoperoxide prostaglandin H2 (PGH2), the precursor of all 2-series prostaglandins and thromboxanes. This complex transformation is initiated by abstraction of hydrogen at carbon 13 (with S-stereochemistry), followed by insertion of molecular O2 to form the endoperoxide bridge between carbon 9 and 11 that defines prostaglandins. The insertion of a second molecule of O2 (bis-oxygenase activity) yields a hydroperoxy group in PGG2 that is then reduced to PGH2 by two electrons. Involved in the constitutive production of prostanoids in particular in the stomach and platelets. In gastric epithelial cells, it is a key step in the generation of prostaglandins, such as prostaglandin E2 (PGE2), which plays an important role in cytoprotection. In platelets, it is involved in the generation of thromboxane A2 (TXA2), which promotes platelet activation and aggregation, vasoconstriction and proliferation of vascular smooth muscle cells. Can also use linoleate (LA, (9Z,12Z)-octadecadienoate, C18:2(n-6)) as substrate and produce hydroxyoctadecadienoates (HODEs) in a regio- and stereospecific manner, being (9R)-HODE ((9R)-hydroxy-(10E,12Z)-octadecadienoate) and (13S)-HODE ((13S)-hydroxy-(9Z,11E)-octadecadienoate) its major products. The protein is Prostaglandin G/H synthase 1 of Homo sapiens (Human).